Reading from the N-terminus, the 957-residue chain is Glycine dehydrogenase (decarboxylating) (957 aa).

Position 708 is an N6-(pyridoxal phosphate)lysine (Lys708).

This sequence belongs to the GcvP family. In terms of assembly, the glycine cleavage system is composed of four proteins: P, T, L and H. Pyridoxal 5'-phosphate serves as cofactor.

It catalyses the reaction N(6)-[(R)-lipoyl]-L-lysyl-[glycine-cleavage complex H protein] + glycine + H(+) = N(6)-[(R)-S(8)-aminomethyldihydrolipoyl]-L-lysyl-[glycine-cleavage complex H protein] + CO2. In terms of biological role, the glycine cleavage system catalyzes the degradation of glycine. The P protein binds the alpha-amino group of glycine through its pyridoxal phosphate cofactor; CO(2) is released and the remaining methylamine moiety is then transferred to the lipoamide cofactor of the H protein. The sequence is that of Glycine dehydrogenase (decarboxylating) from Salmonella typhi.